Reading from the N-terminus, the 446-residue chain is Cobalamin biosynthesis protein CbiHC (446 aa).

The interval 1-246 (MLLLPSRGKL…MFTPRGYSNK (246 aa)) is cobalt-factor III C(17)-methyltransferase. Residues 247–446 (YNIGEKRRAE…CLIEHADRPD (200 aa)) form a cobalt-precorrin-8 methylmutase region.

The protein in the N-terminal section; belongs to the precorrin methyltransferase family. In the C-terminal section; belongs to the CobH family.

It carries out the reaction Co(II)-factor III + S-adenosyl-L-methionine + H(+) = Co(II)-factor IV + S-adenosyl-L-homocysteine. The enzyme catalyses Co-precorrin-8X = cob(II)yrinate. The protein operates within cofactor biosynthesis; adenosylcobalamin biosynthesis; cob(II)yrinate a,c-diamide from sirohydrochlorin (anaerobic route): step 3/10. It participates in cofactor biosynthesis; adenosylcobalamin biosynthesis; cob(II)yrinate a,c-diamide from sirohydrochlorin (anaerobic route): step 9/10. Bifunctional enzyme with a methyltransferase domain that catalyzes the ring contraction and methylation of C-17 in cobalt-factor III to form cobalt-factor IV, and an isomerase domain that catalyzes the conversion of cobalt-precorrin-8 to cobyrinate. The sequence is that of Cobalamin biosynthesis protein CbiHC (cbiHC) from Archaeoglobus fulgidus (strain ATCC 49558 / DSM 4304 / JCM 9628 / NBRC 100126 / VC-16).